A 97-amino-acid polypeptide reads, in one-letter code: Large ribosomal subunit protein uL23 (97 aa).

This sequence belongs to the universal ribosomal protein uL23 family. Part of the 50S ribosomal subunit. Contacts protein L29, and trigger factor when it is bound to the ribosome.

One of the early assembly proteins it binds 23S rRNA. One of the proteins that surrounds the polypeptide exit tunnel on the outside of the ribosome. Forms the main docking site for trigger factor binding to the ribosome. The protein is Large ribosomal subunit protein uL23 of Sulfurihydrogenibium sp. (strain YO3AOP1).